Here is a 585-residue protein sequence, read N- to C-terminus: uncharacterized protein (585 aa).

A disordered region spans residues 27–59; the sequence is DDSERSVKSVSVSISDDEDSKTDVQDNMATPST.

This is an uncharacterized protein from Saccharomyces cerevisiae (strain ATCC 204508 / S288c) (Baker's yeast).